The sequence spans 241 residues: Triosephosphate isomerase (241 aa).

Substrate is bound at residue N9 to K11. H88 (electrophile) is an active-site residue. Catalysis depends on E158, which acts as the Proton acceptor. Substrate-binding positions include G164, S203, and G224–G225.

The protein belongs to the triosephosphate isomerase family. In terms of assembly, homodimer.

It is found in the cytoplasm. It carries out the reaction D-glyceraldehyde 3-phosphate = dihydroxyacetone phosphate. Its pathway is carbohydrate biosynthesis; gluconeogenesis. It functions in the pathway carbohydrate degradation; glycolysis; D-glyceraldehyde 3-phosphate from glycerone phosphate: step 1/1. Its function is as follows. Involved in the gluconeogenesis. Catalyzes stereospecifically the conversion of dihydroxyacetone phosphate (DHAP) to D-glyceraldehyde-3-phosphate (G3P). This chain is Triosephosphate isomerase, found in Dichelobacter nodosus (strain VCS1703A).